Reading from the N-terminus, the 124-residue chain is Probable glycine cleavage system H protein (124 aa).

The Lipoyl-binding domain maps to 23–104 (VATVGITDYA…PYKNWLVKIR (82 aa)). Lys-64 bears the N6-lipoyllysine mark.

The protein belongs to the GcvH family. The glycine cleavage system is composed of four proteins: P, T, L and H. The cofactor is (R)-lipoate.

The glycine cleavage system catalyzes the degradation of glycine. The H protein shuttles the methylamine group of glycine from the P protein to the T protein. The protein is Probable glycine cleavage system H protein of Picrophilus torridus (strain ATCC 700027 / DSM 9790 / JCM 10055 / NBRC 100828 / KAW 2/3).